Here is a 162-residue protein sequence, read N- to C-terminus: ATP synthase subunit b (162 aa).

A helical transmembrane segment spans residues 6-25 (TLFTLVTFLVLMLAVGKVAW).

It belongs to the ATPase B chain family. As to quaternary structure, F-type ATPases have 2 components, F(1) - the catalytic core - and F(0) - the membrane proton channel. F(1) has five subunits: alpha(3), beta(3), gamma(1), delta(1), epsilon(1). F(0) has three main subunits: a(1), b(2) and c(10-14). The alpha and beta chains form an alternating ring which encloses part of the gamma chain. F(1) is attached to F(0) by a central stalk formed by the gamma and epsilon chains, while a peripheral stalk is formed by the delta and b chains.

Its subcellular location is the cell membrane. F(1)F(0) ATP synthase produces ATP from ADP in the presence of a proton or sodium gradient. F-type ATPases consist of two structural domains, F(1) containing the extramembraneous catalytic core and F(0) containing the membrane proton channel, linked together by a central stalk and a peripheral stalk. During catalysis, ATP synthesis in the catalytic domain of F(1) is coupled via a rotary mechanism of the central stalk subunits to proton translocation. Functionally, component of the F(0) channel, it forms part of the peripheral stalk, linking F(1) to F(0). The protein is ATP synthase subunit b of Lacticaseibacillus paracasei (strain ATCC 334 / BCRC 17002 / CCUG 31169 / CIP 107868 / KCTC 3260 / NRRL B-441) (Lactobacillus paracasei).